We begin with the raw amino-acid sequence, 1162 residues long: Cartilage intermediate layer protein 2 (1162 aa).

The signal sequence occupies residues 1 to 20 (MASPLPLLYLCLAALHLAGA). A disordered region spans residues 23–51 (ATPTEEHTSTARGLQGRPPDTGQPSPALE). Residues 146–197 (EAAWGAWGAWGLCSKSCGLGRRLRRRSCQSSSGDTCPGSPQEAQKCVRSRCP) enclose the TSP type-1 domain. 4 cysteine pairs are disulfide-bonded: cysteine 158/cysteine 191, cysteine 162/cysteine 196, cysteine 173/cysteine 181, and cysteine 314/cysteine 360. In terms of domain architecture, Ig-like C2-type spans 293–377 (PYLVKHPESR…TVRSRAALLT (85 aa)). The N-linked (GlcNAc...) asparagine glycan is linked to asparagine 330.

Post-translationally, may be cleaved into 2 chains possibly by a furin-like protease upon or preceding secretion. N-glycosylated. In terms of tissue distribution, expressed in articulated and meniscal cartilage (at protein level). Also detected in heart, skeletal muscle and brain. Not detected in growth plate cartilage.

It localises to the secreted. The protein localises to the extracellular space. It is found in the extracellular matrix. Its function is as follows. May play a role in cartilage scaffolding. The sequence is that of Cartilage intermediate layer protein 2 from Mus musculus (Mouse).